Consider the following 274-residue polypeptide: tRNA-cytidine(32) 2-sulfurtransferase (274 aa).

The PP-loop motif motif lies at 40-45; that stretch reads SGGKDS. C115, C118, and C206 together coordinate [4Fe-4S] cluster.

It belongs to the TtcA family. In terms of assembly, homodimer. Requires Mg(2+) as cofactor. [4Fe-4S] cluster serves as cofactor.

The protein resides in the cytoplasm. The catalysed reaction is cytidine(32) in tRNA + S-sulfanyl-L-cysteinyl-[cysteine desulfurase] + AH2 + ATP = 2-thiocytidine(32) in tRNA + L-cysteinyl-[cysteine desulfurase] + A + AMP + diphosphate + H(+). It functions in the pathway tRNA modification. Its function is as follows. Catalyzes the ATP-dependent 2-thiolation of cytidine in position 32 of tRNA, to form 2-thiocytidine (s(2)C32). The sulfur atoms are provided by the cysteine/cysteine desulfurase (IscS) system. The sequence is that of tRNA-cytidine(32) 2-sulfurtransferase from Pseudomonas fluorescens (strain SBW25).